We begin with the raw amino-acid sequence, 817 residues long: Phospholipase D alpha 2 (817 aa).

In terms of domain architecture, C2 spans 1–130 (MAHLLLHGTL…LSGEAIERRL (130 aa)). Asp192 is a Ca(2+) binding site. In terms of domain architecture, PLD phosphodiesterase 1 spans 333-372 (YMITHHQKTVIVDHDMPVPRGGGSRRIVSFVGGLDLCDGR). Residues His338, Lys340, and Asp345 contribute to the active site. A 1,2-diacyl-sn-glycero-3-phosphate is bound at residue His338. The Ca(2+) site is built by His378 and His412. A 1,2-diacyl-sn-glycero-3-phosphate-binding residues include Gln529 and His668. The region spanning 663-690 (FMIYVHSKMMIVDDEYIIVGSANINQRS) is the PLD phosphodiesterase 2 domain. Active-site residues include His668, Lys670, and Asp675. A Ca(2+)-binding site is contributed by Glu730.

The protein belongs to the phospholipase D family. C2-PLD subfamily. Ca(2+) serves as cofactor.

The catalysed reaction is a 1,2-diacyl-sn-glycero-3-phosphocholine + H2O = a 1,2-diacyl-sn-glycero-3-phosphate + choline + H(+). Hydrolyzes glycerol-phospholipids at the terminal phosphodiesteric bond. Plays an important role in various cellular processes. The sequence is that of Phospholipase D alpha 2 (PLD2) from Oryza sativa subsp. japonica (Rice).